The following is a 78-amino-acid chain: Surfactant-associated protein 2 (78 aa).

The signal sequence occupies residues 1 to 19 (MGSGLPLVLLLTLLGSSHG). N37 is a glycosylation site (N-linked (GlcNAc...) asparagine).

Post-translationally, N-glycosylated. As to expression, predominantly expressed in lung, where it is detected in type II pneumocytes in the alveolus, and in nonciliated epithelium in bronchioli (at protein level). Also detected at lower levels in cervix, esophagus, stomach, testis and kidney.

It is found in the secreted. The protein localises to the cytoplasmic vesicle. It localises to the secretory vesicle. The protein resides in the golgi apparatus. Putative surfactant protein. This chain is Surfactant-associated protein 2 (SFTA2), found in Homo sapiens (Human).